Here is a 92-residue protein sequence, read N- to C-terminus: MAFIKRDNKNKKRFQQQNPLFKRKRFCRFTVAGVEQIDYKDLDTLKDFIGDNGKITPARLTGTKAHYQRQLDTAIKRARFLALMPYTDLHKN.

It belongs to the bacterial ribosomal protein bS18 family. Part of the 30S ribosomal subunit. Forms a tight heterodimer with protein bS6.

Its function is as follows. Binds as a heterodimer with protein bS6 to the central domain of the 16S rRNA, where it helps stabilize the platform of the 30S subunit. The protein is Small ribosomal subunit protein bS18A of Cupriavidus pinatubonensis (strain JMP 134 / LMG 1197) (Cupriavidus necator (strain JMP 134)).